The chain runs to 276 residues: NADPH-dependent 7-cyano-7-deazaguanine reductase (276 aa).

Position 83–85 (83–85 (IES)) interacts with substrate. 85-86 (SK) lines the NADPH pocket. Residue Cys-184 is the Thioimide intermediate of the active site. The active-site Proton donor is Asp-191. 223 to 224 (HE) contacts substrate. 252–253 (RG) is a binding site for NADPH.

Belongs to the GTP cyclohydrolase I family. QueF type 2 subfamily. Homodimer.

The protein localises to the cytoplasm. It carries out the reaction 7-aminomethyl-7-carbaguanine + 2 NADP(+) = 7-cyano-7-deazaguanine + 2 NADPH + 3 H(+). Its pathway is tRNA modification; tRNA-queuosine biosynthesis. Functionally, catalyzes the NADPH-dependent reduction of 7-cyano-7-deazaguanine (preQ0) to 7-aminomethyl-7-deazaguanine (preQ1). This chain is NADPH-dependent 7-cyano-7-deazaguanine reductase, found in Desulfotalea psychrophila (strain LSv54 / DSM 12343).